The following is a 1405-amino-acid chain: Xanthine dehydrogenase (1405 aa).

Positions 17–104 constitute a 2Fe-2S ferredoxin-type domain; it reads NKLTFYVNGV…GKHLITVEGI (88 aa). Residues Cys56, Cys61, Cys64, Cys86, Cys125, Cys128, Cys161, and Cys163 each contribute to the [2Fe-2S] cluster site. Residues 288 to 474 enclose the FAD-binding PCMH-type domain; sequence FGNEQKVWFR…TKIFVPETVP (187 aa). FAD is bound by residues 316-323, Phe397, 407-411, Asp420, Ile464, and Lys483; these read IVGGASEI and TPAGN. Positions 833 and 864 each coordinate Mo-molybdopterin. Substrate is bound by residues Glu868 and Arg946. Residue Arg978 coordinates Mo-molybdopterin. Phe980 serves as a coordination point for substrate. Ala1147 is a Mo-molybdopterin binding site. Glu1333 acts as the Proton acceptor in catalysis.

This sequence belongs to the xanthine dehydrogenase family. As to quaternary structure, homodimer. Mo-molybdopterin serves as cofactor. Requires [2Fe-2S] cluster as cofactor. It depends on FAD as a cofactor.

It is found in the cytoplasm. It carries out the reaction hypoxanthine + NAD(+) + H2O = xanthine + NADH + H(+). The enzyme catalyses xanthine + NAD(+) + H2O = urate + NADH + H(+). Its pathway is purine metabolism. Its activity is regulated as follows. Completely inhibited by allopurinol and significantly inhibited by adenine. Inhibited by Fe(2+), Cd(2+) and Zn(2+) and strongly inhibited by Cu(2+). Mg(2+) and Mo(2+) have no effect on activity. Functionally, key enzyme in purine degradation. Catalyzes the oxidation of hypoxanthine to xanthine. Catalyzes the oxidation of xanthine to uric acid. Oxidizes xanthine, hypoxanthine and pterine at high rates. Can also act on purine and guanine. This Blastobotrys adeninivorans (Yeast) protein is Xanthine dehydrogenase.